The following is a 418-amino-acid chain: Lysophosphatidic acid phosphatase type 6 (418 aa).

Residues 1–25 (MRVWVPVGVLTSLAYCFHQRRVALA) constitute a mitochondrion transit peptide. Positions 51–161 (RHGARSPLKP…VFIRSTNMFR (111 aa)) are substrate binding. H52 serves as the catalytic Nucleophile. The Proton donor role is filled by D327.

The protein belongs to the histidine acid phosphatase family. In terms of assembly, monomer.

The protein resides in the mitochondrion. It carries out the reaction a phosphate monoester + H2O = an alcohol + phosphate. It catalyses the reaction 1-(9Z-octadecenoyl)-sn-glycero-3-phosphate + H2O = 1-(9Z-octadecenoyl)-sn-glycerol + phosphate. Hydrolyzes lysophosphatidic acid (LPA) containing a medium length fatty acid chain to the corresponding monoacylglycerol. Has highest activity with lysophosphatidic acid containing myristate (C14:0), monounsaturated oleate (C18:1) or palmitate (C16:0), and lower activity with C18:0 and C6:0 lysophosphatidic acid. The polypeptide is Lysophosphatidic acid phosphatase type 6 (Acp6) (Mus musculus (Mouse)).